The following is a 364-amino-acid chain: Spermidine/putrescine import ATP-binding protein PotA (364 aa).

The region spanning 5-235 (LSFKDVSKGF…PVNRFVADFI (231 aa)) is the ABC transporter domain. 37-44 (GPSGCGKT) contributes to the ATP binding site.

This sequence belongs to the ABC transporter superfamily. Spermidine/putrescine importer (TC 3.A.1.11.1) family. In terms of assembly, the complex is composed of two ATP-binding proteins (PotA), two transmembrane proteins (PotB and PotC) and a solute-binding protein (PotD).

The protein resides in the cell membrane. It catalyses the reaction ATP + H2O + polyamine-[polyamine-binding protein]Side 1 = ADP + phosphate + polyamineSide 2 + [polyamine-binding protein]Side 1.. Part of the ABC transporter complex PotABCD involved in spermidine/putrescine import. Responsible for energy coupling to the transport system. The chain is Spermidine/putrescine import ATP-binding protein PotA from Staphylococcus epidermidis (strain ATCC 12228 / FDA PCI 1200).